Here is a 434-residue protein sequence, read N- to C-terminus: Mitochondrial distribution and morphology protein 12 (434 aa).

One can recognise an SMP-LTD domain in the interval 1–434; sequence MSIDIDWERA…VYPSFWTFLV (434 aa). Residues 70 to 83 show a composition bias toward acidic residues; the sequence is YEEDDNENFSESSE. Disordered stretches follow at residues 70–141 and 181–277; these read YEED…LRSP and TPLG…LPPR. Residues 86-97 are compositionally biased toward basic and acidic residues; that stretch reads SPTREPVDRYGS. Over residues 215 to 237 the composition is skewed to polar residues; that stretch reads SAQSRPSTANTGNTLLSRGSMSS.

Belongs to the MDM12 family. As to quaternary structure, component of the ER-mitochondria encounter structure (ERMES) or MDM complex, composed of MMM1, MDM10, MDM12 and MDM34. An MMM1 homodimer associates with one molecule of MDM12 on each side in a pairwise head-to-tail manner, and the SMP-LTD domains of MMM1 and MDM12 generate a continuous hydrophobic tunnel for phospholipid trafficking.

It is found in the mitochondrion outer membrane. The protein resides in the endoplasmic reticulum membrane. Component of the ERMES/MDM complex, which serves as a molecular tether to connect the endoplasmic reticulum (ER) and mitochondria. Components of this complex are involved in the control of mitochondrial shape and protein biogenesis, and function in nonvesicular lipid trafficking between the ER and mitochondria. MDM12 is required for the interaction of the ER-resident membrane protein MMM1 and the outer mitochondrial membrane-resident beta-barrel protein MDM10. The MDM12-MMM1 subcomplex functions in the major beta-barrel assembly pathway that is responsible for biogenesis of all mitochondrial outer membrane beta-barrel proteins, and acts in a late step after the SAM complex. The MDM10-MDM12-MMM1 subcomplex further acts in the TOM40-specific pathway after the action of the MDM12-MMM1 complex. Essential for establishing and maintaining the structure of mitochondria and maintenance of mtDNA nucleoids. This is Mitochondrial distribution and morphology protein 12 from Ajellomyces dermatitidis (strain ER-3 / ATCC MYA-2586) (Blastomyces dermatitidis).